The following is a 180-amino-acid chain: MSTRFQEHYQSKVVADLIAKFGYKSVMEVPRITKVTLNMGLGDAVNDKKIIENAVGDLTKVAGQKPVVTKAKKAIAGFKIRQGYPIGAMVTLRSSRMYEFLDRFVTVALPRVRDFRGISGKAFDGRGNYNIGVKEQIIFPEIEYDKIDALRGLNISITTTAKTDEEAKALLAAFKFPFRN.

This sequence belongs to the universal ribosomal protein uL5 family. Part of the 50S ribosomal subunit; part of the 5S rRNA/L5/L18/L25 subcomplex. Contacts the 5S rRNA and the P site tRNA. Forms a bridge to the 30S subunit in the 70S ribosome.

In terms of biological role, this is one of the proteins that bind and probably mediate the attachment of the 5S RNA into the large ribosomal subunit, where it forms part of the central protuberance. In the 70S ribosome it contacts protein S13 of the 30S subunit (bridge B1b), connecting the 2 subunits; this bridge is implicated in subunit movement. Contacts the P site tRNA; the 5S rRNA and some of its associated proteins might help stabilize positioning of ribosome-bound tRNAs. The polypeptide is Large ribosomal subunit protein uL5 (Polynucleobacter necessarius subsp. necessarius (strain STIR1)).